Consider the following 207-residue polypeptide: NADH-quinone oxidoreductase subunit C (207 aa).

This sequence belongs to the complex I 30 kDa subunit family. In terms of assembly, NDH-1 is composed of 14 different subunits. Subunits NuoB, C, D, E, F, and G constitute the peripheral sector of the complex.

Its subcellular location is the cell inner membrane. The catalysed reaction is a quinone + NADH + 5 H(+)(in) = a quinol + NAD(+) + 4 H(+)(out). NDH-1 shuttles electrons from NADH, via FMN and iron-sulfur (Fe-S) centers, to quinones in the respiratory chain. The immediate electron acceptor for the enzyme in this species is believed to be ubiquinone. Couples the redox reaction to proton translocation (for every two electrons transferred, four hydrogen ions are translocated across the cytoplasmic membrane), and thus conserves the redox energy in a proton gradient. The protein is NADH-quinone oxidoreductase subunit C of Bordetella pertussis (strain Tohama I / ATCC BAA-589 / NCTC 13251).